Here is a 198-residue protein sequence, read N- to C-terminus: Recombination protein RecR (198 aa).

The C4-type zinc finger occupies 57-72 (CSVCGHITDRDPCYIC). Positions 80–175 (SVVCVVQEPK…KVTRIAHGLP (96 aa)) constitute a Toprim domain.

Belongs to the RecR family.

May play a role in DNA repair. It seems to be involved in an RecBC-independent recombinational process of DNA repair. It may act with RecF and RecO. In Bacillus anthracis (strain A0248), this protein is Recombination protein RecR.